A 213-amino-acid chain; its full sequence is Nicolin-1 (213 aa).

Part of the neuronal tubulin polyglutamylase complex which contains TPGS1, TPGS2, TTLL1, LRRC49 and NICN1.

The protein resides in the nucleus. The sequence is that of Nicolin-1 (NICN1) from Canis lupus familiaris (Dog).